A 440-amino-acid chain; its full sequence is Beta-1,3-galactosyl-O-glycosyl-glycoprotein beta-1,6-N-acetylglucosaminyltransferase 3 (440 aa).

The Cytoplasmic portion of the chain corresponds to 1 to 12; that stretch reads MKMTGWKKKLCR. Residues 13-30 form a helical; Signal-anchor for type II membrane protein membrane-spanning segment; the sequence is GHHLWALGCYMLLAVVAL. Residues 31-440 are Lumenal-facing; the sequence is RLSLRLKCDV…RHKAIYGTEL (410 aa). 4 disulfide bridges follow: C73–C230, C164–C384, C185–C212, and C393–C425. N-linked (GlcNAc...) asparagine glycosylation is present at N108.

Belongs to the glycosyltransferase 14 family. Post-translationally, N-glycosylated.

It localises to the golgi apparatus membrane. The catalysed reaction is a 3-O-[beta-D-galactosyl-(1-&gt;3)-N-acetyl-alpha-D-galactosaminyl]-L-seryl-[protein] + UDP-N-acetyl-alpha-D-glucosamine = 3-O-{beta-D-galactosyl-(1-&gt;3)-[N-acetyl-beta-D-glucosaminyl-(1-&gt;6)]-N-acetyl-alpha-D-galactosaminyl}-L-seryl-[protein] + UDP + H(+). It carries out the reaction a 3-O-[beta-D-galactosyl-(1-&gt;3)-N-acetyl-alpha-D-galactosaminyl]-L-threonyl-[protein] + UDP-N-acetyl-alpha-D-glucosamine = a 3-O-{beta-D-galactosyl-(1-&gt;3)-[N-acetyl-beta-D-glucosaminyl-(1-&gt;6)]-N-acetyl-alpha-D-galactosaminyl}-L-threonyl-[protein] + UDP + H(+). It catalyses the reaction a beta-D-Gal-(1-&gt;4)-beta-D-GlcNAc-(1-&gt;3)-beta-D-Gal-(1-&gt;4)-beta-D-GlcNAc derivative + UDP-N-acetyl-alpha-D-glucosamine = a beta-D-Gal-(1-&gt;4)-beta-D-GlcNAc-(1-&gt;3)-[beta-D-GlcNAc-(1-&gt;6)]-beta-D-Gal-(1-&gt;4)-N-acetyl-beta-D-glucosaminyl derivative + UDP + H(+). The enzyme catalyses 3-O-[N-acetyl-beta-D-glucosaminyl-(1-&gt;3)-N-acetyl-alpha-D-galactosaminyl]-L-seryl-[protein] + UDP-N-acetyl-alpha-D-glucosamine = 3-O-[N-acetyl-beta-D-glucosaminyl-(1-&gt;3)-[N-acetyl-beta-D-glucosaminyl-(1-&gt;6)]-N-acetyl-alpha-D-galactosaminyl]-L-seryl-[protein] + UDP + H(+). The catalysed reaction is a 3-O-[N-acetyl-beta-D-glucosaminyl-(1-&gt;3)-N-acetyl-alpha-D-galactosaminyl]-L-threonyl-[protein] + UDP-N-acetyl-alpha-D-glucosamine = 3-O-[N-acetyl-beta-D-glucosaminyl-(1-&gt;3)-[N-acetyl-beta-D-glucosaminyl-(1-&gt;6)]-N-acetyl-alpha-D-galactosaminyl]-L-threonyl-[protein] + UDP + H(+). It participates in protein modification; protein glycosylation. Functionally, glycosyltransferase that can synthesize all known mucin beta 6 N-acetylglucosaminides. Mediates core 2 and core 4 O-glycan branching, 2 important steps in mucin-type biosynthesis. Also has I-branching enzyme activity by converting linear into branched poly-N-acetyllactosaminoglycans, leading to introduce the blood group I antigen during embryonic development. This chain is Beta-1,3-galactosyl-O-glycosyl-glycoprotein beta-1,6-N-acetylglucosaminyltransferase 3 (GCNT3), found in Ovis aries (Sheep).